The sequence spans 696 residues: DNA ligase (696 aa).

Residues 43-47, 92-93, and E122 each bind NAD(+); these read DGEFD and SL. K124 serves as the catalytic N6-AMP-lysine intermediate. Positions 145, 185, 301, and 325 each coordinate NAD(+). The Zn(2+) site is built by C419, C422, C438, and C444. Positions 608–696 constitute a BRCT domain; it reads SIPRNLEGLS…GPDAVAESGV (89 aa).

It belongs to the NAD-dependent DNA ligase family. LigA subfamily. Mg(2+) serves as cofactor. Requires Mn(2+) as cofactor.

It catalyses the reaction NAD(+) + (deoxyribonucleotide)n-3'-hydroxyl + 5'-phospho-(deoxyribonucleotide)m = (deoxyribonucleotide)n+m + AMP + beta-nicotinamide D-nucleotide.. Functionally, DNA ligase that catalyzes the formation of phosphodiester linkages between 5'-phosphoryl and 3'-hydroxyl groups in double-stranded DNA using NAD as a coenzyme and as the energy source for the reaction. It is essential for DNA replication and repair of damaged DNA. In Rhodococcus jostii (strain RHA1), this protein is DNA ligase.